The primary structure comprises 2142 residues: MADAAARQLQYEYKANSNLVLQADVRLIERPRRDEATGEVCSLVGKLDGTRMGDRYQRTKPEKTEERKVKRQKRDEAQYDFERMKGATLLSEGIDEMVGIVYRPKTQETRQTYEVLLSFIQEALGDQPRDILCGAADEILAVLKNDRLKDRERKKDIDSLLGAVTDERFALLVNLGKKITDFGSDAVNALTAAPNNEEQIDETYGINVQFEESEEESDNDMYGEIRDDDAQDEGEEARIDHTLHAENLANEEAANNVKKERSLHPLDIDAYWLQRCLSKFYKDAMVSQSKAADVLKILKDAADDRDCENQLVLLLGYDCFDFIKQLKLNRQMVLYCTMLASAQTDSERQRIREKMRGNSALAKILRQLDTGKSEDQEEGEARGSKRGKGDAEDGGAAAAGQVAGVRQLLELEEMAFTQGSHFMANKRCQLPDGSYRKQRKGYEEVHVPALKPVPFDANEELQPVDKLPKYVQPVFEGFKTLNRIQSRLYKAALDSDENMLLCAPTGAGKTNVALLTMMREIGKHINEDGTINAQDFKIIYVAPMKSLVQEMVGNFGRRLACYNLTVSELTGDHQLTREQIAATQVIVCTPEKWDIITRKGGERTFVSLVRLVIIDEIHLLHDERGPVLEALVARTIRNIETTQEEVRLVGLSATLPNYQDVATFLRVKPDKGLFYFDNSYRPVSLEQQYIGVTEKKALKRFQVMNEIVYEKTMEHAGRNQVLVFVHSRKETGKTARAVRDMCLEQDTLGSFLKEGSASMEVLRTEAEQVKNTELKELLPYGFAIHHAGMTRVDRTLVEDLFADRHIQVLVSTATLAWGVNLPAHTVIIKGTQVYNPEKGRWVELSALDVLQMLGRAGRPQYDTKGEGILITNHSELQFYLSLLNQQLPIESQFISKLPDMLNAEIVLGTVQHLQDAVNWLGYTYLYIRMLRNPTLYGVSHDAIKADPLLEQHRADLLHTAACCLERSGLIKYDRKTGHFQVTDLGRIASHYYLTHETMLTYNQLLKQTLSEIELFRVFSLSSEFRHISVREEEKLELQKLMERVPIPIKESIEEHSAKVNVLLQAYISQLKLEGFALMSDMVFITQSAARLMRAIFEIVLTRGWAQLADKTLTLCKMIDRRMWQSMTPLRQFKKMPDEIAKKLEKKHFPWGRLYDLEPHELGELIRVPKLGKTIHKFVHQFPKLELSTHIQPITRGTLRVELTITPDFQWDEKVHGQSEGFWVLIEDVDSELILHHEFFLLKQKYSQDEHQLKFFVPVFEPLPPQYFLRIVSDRWIGAETQLPVSFRHLILPEKNMPPTELLDLQPLPISALRQPKFESFYSQRFPQFNPIQTQVFNAVYNSDENVFVGAPTGSGKMTIAEFAIMRLFTTQSDARCVYLVSEEALADLVFADWHSKFGSLDIKVVKLTGETGTDLKLIAKGQLVITTADKWDVLSRRWKQRKNVQLVNLFIVDELQLVGGEEGPVLEIVCSRMRYISSQIEKQIRIVALSASLTDARDVAQWLGCNPNATFNFHPSVRPIPLELHIQGYNVTHNATRIATMSKPVYNAILKYSAHKPVIVFVSSRKQARLTAIDVLTYAASDLQPNRFFHAEEEDIKPFLERMTDKTLKETLAQGVAYLHEGLSASDHRLVEQLFDSGAVQVAVISRDLCWGMSISAHLVIIMDTQFYNGKNHSYEDYPITDVLQMIGRANRPNEDADAKCVLMCQSSKKDFFKKFINEPLPIESHLDHRMHDHFNAEVVTKTIENKQDAVDYLTWTFLYRRLTQNPNYYNLQGVTHRHLSDHLSELVENTLSDLEQSKCISVEDDMDTLPLNLGMIAAYYYINYTTIELFSLSLNSKTKVRGLLEIISSAAEYEDVVVRHHEEQVLRTLSQRLPNKLTGPNETAPKFNDPHIKTNLLLQAHLSRLQLGPELQGDTEQILSKAIRLIQACVDVLSSNGWLSPAVAAMELAQMVTQAMWSKDSYLKQLPHFSPEIVKRCTEKKIETVFDIMELEDEDRTRLLQLSDLQMADVARFCNRYPNIELNYEVVDKDRINSGSTVNVVVQLEREDEVTGPVIAPFFPQKREEGWWVVIGDPKTNSLLSIKRLTLQQKAKVKLDFVAPSPGKHDYTLYYMSDSYLGCDQEYKFSIEVGDFQSESESESD.

3 disordered regions span residues 52-74 (MGDR…RQKR), 211-234 (EESE…QDEG), and 366-396 (RQLD…DGGA). Residues 369–391 (DTGKSEDQEEGEARGSKRGKGDA) show a composition bias toward basic and acidic residues. The 184-residue stretch at 490 to 673 (KAALDSDENM…FLRVKPDKGL (184 aa)) folds into the Helicase ATP-binding 1 domain. 503 to 510 (APTGAGKT) contributes to the ATP binding site. Residues 615-618 (DEIH) carry the DEIH box motif. Positions 684–917 (SLEQQYIGVT…GTVQHLQDAV (234 aa)) constitute a Helicase C-terminal 1 domain. An SEC63 1 domain is found at 981 to 1286 (VTDLGRIASH…GAETQLPVSF (306 aa)). One can recognise a Helicase ATP-binding 2 domain in the interval 1337–1511 (NAVYNSDENV…WLGCNPNATF (175 aa)). 1350–1357 (APTGSGKM) contributes to the ATP binding site. The DELQ box signature appears at 1453 to 1456 (DELQ). Residues 1544 to 1752 (PVYNAILKYS…TIENKQDAVD (209 aa)) enclose the Helicase C-terminal 2 domain. One can recognise an SEC63 2 domain in the interval 1811–2128 (PLNLGMIAAY…GCDQEYKFSI (318 aa)).

It belongs to the helicase family. SKI2 subfamily.

The protein resides in the nucleus. The enzyme catalyses ATP + H2O = ADP + phosphate + H(+). In terms of biological role, catalyzes the ATP-dependent unwinding of U4/U6 RNA duplices, an essential step in the assembly of a catalytically active spliceosome. Plays a role in pre-mRNA splicing. In Drosophila melanogaster (Fruit fly), this protein is U5 small nuclear ribonucleoprotein 200 kDa helicase.